The chain runs to 580 residues: Arginine--tRNA ligase (580 aa).

Positions 131–141 (ANPTGPMHVGH) match the 'HIGH' region motif.

This sequence belongs to the class-I aminoacyl-tRNA synthetase family. As to quaternary structure, monomer.

Its subcellular location is the cytoplasm. The enzyme catalyses tRNA(Arg) + L-arginine + ATP = L-arginyl-tRNA(Arg) + AMP + diphosphate. The chain is Arginine--tRNA ligase from Cereibacter sphaeroides (strain ATCC 17029 / ATH 2.4.9) (Rhodobacter sphaeroides).